A 366-amino-acid chain; its full sequence is Ribosomal RNA large subunit methyltransferase M (366 aa).

Residues Ser188, 221 to 224 (CPGG), Asp240, Asp260, and Asp277 contribute to the S-adenosyl-L-methionine site. Lys306 functions as the Proton acceptor in the catalytic mechanism.

Belongs to the class I-like SAM-binding methyltransferase superfamily. RNA methyltransferase RlmE family. RlmM subfamily. As to quaternary structure, monomer.

The protein localises to the cytoplasm. It carries out the reaction cytidine(2498) in 23S rRNA + S-adenosyl-L-methionine = 2'-O-methylcytidine(2498) in 23S rRNA + S-adenosyl-L-homocysteine + H(+). Catalyzes the 2'-O-methylation at nucleotide C2498 in 23S rRNA. This is Ribosomal RNA large subunit methyltransferase M from Pectobacterium carotovorum subsp. carotovorum (strain PC1).